The chain runs to 708 residues: MATTRGGSGPDPGSRGLLLLSFSVVLAGLCGGNSVERKIYIPLNKTAPCVRLLNATHQIGCQSSISGDTGVIHVVEKEEDLKWVLTDGPNPPYMVLLEGKLFTRDVMEKLKGTTSRIAGLAVTLAKPNSTSSFSPSVQCPNDGFGIYSNSYGPEFAHCKKTLWNELGNGLAYEDFSFPIFLLEDENETKVIKQCYQDHNLGQNGSAPSFPLCAMQLFSHMHAVISTATCMRRSFIQSTFSINPEIVCDPLSDYNVWSMLKPINTSVGLEPDVRVVVAATRLDSRSFFWNVAPGAESAVASFVTQLAAAEALHKAPDVTTLSRNVMFVFFQGETFDYIGSSRMVYDMENGKFPVRLENIDSFVELGQVALRTSLDLWMHTDPMSQKNESVKNQVEDLLATLEKSGAGVPEVVLRRLAQSQALPPSSLQRFLRARNISGVVLADHSGSFHNRYYQSIYDTAENINVTYPEWQSPEEDLNFVTDTAKALANVATVLARALYELAGGTNFSSSIQADPQTVTRLLYGFLVRANNSWFQSILKHDLRSYLDDRPLQHYIAVSSPTNTTYVVQYALANLTGKATNLTREQCQDPSKVPNESKDLYEYSWVQGPWNSNRTERLPQCVRSTVRLARALSPAFELSQWSSTEYSTWAESRWKDIQARIFLIASKELEFITLIVGFSTLVFSLIVTYCINAKADVLFVAPREPGAVSY.

A signal peptide spans 1–27 (MATTRGGSGPDPGSRGLLLLSFSVVLA). Residues 28 to 668 (GLCGGNSVER…IFLIASKELE (641 aa)) are Lumenal-facing. Asparagine 44, asparagine 54, and asparagine 128 each carry an N-linked (GlcNAc...) asparagine glycan. Cysteine 49 and cysteine 61 are oxidised to a cystine. A disulfide bond links cysteine 139 and cysteine 158. Asparagine 186 and asparagine 203 each carry an N-linked (GlcNAc...) asparagine glycan. 2 disulfide bridges follow: cysteine 194-cysteine 212 and cysteine 229-cysteine 247. N-linked (GlcNAc...) asparagine glycans are attached at residues asparagine 263, asparagine 386, asparagine 434, asparagine 463, asparagine 505, asparagine 529, asparagine 561, asparagine 572, asparagine 579, asparagine 593, and asparagine 611. Cysteine 585 and cysteine 619 are disulfide-bonded. Residues 669-689 (FITLIVGFSTLVFSLIVTYCI) form a helical membrane-spanning segment. The Cytoplasmic segment spans residues 690 to 708 (NAKADVLFVAPREPGAVSY).

This sequence belongs to the nicastrin family. In terms of assembly, component of the gamma-secretase complex. The functional gamma-secretase complex is composed of at least four polypeptides: a presenilin homodimer (PSEN1 or PSEN2), nicastrin (NCSTN), APH1 (APH1A or APH1B) and PEN2. Binds to proteolytic processed C-terminal fragments C83 and C99 of the amyloid precursor protein (APP). Interacts with PSEN1 and PSEN2. Post-translationally, N-glycosylated.

Its subcellular location is the membrane. The protein resides in the cytoplasmic vesicle membrane. It is found in the melanosome. Essential subunit of the gamma-secretase complex, an endoprotease complex that catalyzes the intramembrane cleavage of integral membrane proteins such as Notch receptors and APP (amyloid-beta precursor protein). The gamma-secretase complex plays a role in Notch and Wnt signaling cascades and regulation of downstream processes via its role in processing key regulatory proteins, and by regulating cytosolic CTNNB1 levels. The chain is Nicastrin (Ncstn) from Mus musculus (Mouse).